We begin with the raw amino-acid sequence, 739 residues long: Phosphoribosylformylglycinamidine synthase subunit PurL (739 aa).

The active site involves histidine 54. Residues tyrosine 57 and lysine 96 each coordinate ATP. Glutamate 98 is a binding site for Mg(2+). Substrate contacts are provided by residues 99-102 and arginine 121; that span reads SHNH. The Proton acceptor role is filled by histidine 100. Aspartate 122 serves as a coordination point for Mg(2+). Residue glutamine 245 participates in substrate binding. Mg(2+) is bound at residue aspartate 273. Position 317–319 (317–319) interacts with substrate; the sequence is ESQ. Residues aspartate 500 and glycine 537 each contribute to the ATP site. Mg(2+) is bound at residue asparagine 538. Position 540 (serine 540) interacts with substrate.

Belongs to the FGAMS family. Monomer. Part of the FGAM synthase complex composed of 1 PurL, 1 PurQ and 2 PurS subunits.

It localises to the cytoplasm. The catalysed reaction is N(2)-formyl-N(1)-(5-phospho-beta-D-ribosyl)glycinamide + L-glutamine + ATP + H2O = 2-formamido-N(1)-(5-O-phospho-beta-D-ribosyl)acetamidine + L-glutamate + ADP + phosphate + H(+). Its pathway is purine metabolism; IMP biosynthesis via de novo pathway; 5-amino-1-(5-phospho-D-ribosyl)imidazole from N(2)-formyl-N(1)-(5-phospho-D-ribosyl)glycinamide: step 1/2. Part of the phosphoribosylformylglycinamidine synthase complex involved in the purines biosynthetic pathway. Catalyzes the ATP-dependent conversion of formylglycinamide ribonucleotide (FGAR) and glutamine to yield formylglycinamidine ribonucleotide (FGAM) and glutamate. The FGAM synthase complex is composed of three subunits. PurQ produces an ammonia molecule by converting glutamine to glutamate. PurL transfers the ammonia molecule to FGAR to form FGAM in an ATP-dependent manner. PurS interacts with PurQ and PurL and is thought to assist in the transfer of the ammonia molecule from PurQ to PurL. The sequence is that of Phosphoribosylformylglycinamidine synthase subunit PurL from Bacillus cereus (strain Q1).